Here is a 369-residue protein sequence, read N- to C-terminus: MKKLIAVAVLSACGSLAHANTNIPNYNTDAHLYEFTQTYDLVVPKGSQGQTNLWVPLPFNGEYQQVKSIHFEGNYMNAYVTENNKYGAKTLFATWNKDAQKRDLKVMMVIETKDREPMVKGALENYTPPKDIQYSVDVQEYLKATPHIKTDGIVKEFPDKILGKETNPLKKAELIHHWFVKNMERDNSVLGCGDGDVEKILTTGVLKGKCTDINSVFVALARAAGIPAREIFGIRLGAAEKMGKYSKGAFGSANEQGIANVSGGQHCRAEFYLAGFGWVPVDSADVAKMRLAEKKSVEDKDTQAVAKYLFGNWEANWVGFNHARDFDLYPQPELAPINNFGYPYAEVGGDPLNSFDPKEFKYDYVSKKL.

An N-terminal signal peptide occupies residues 1–19 (MKKLIAVAVLSACGSLAHA).

This is an uncharacterized protein from Haemophilus influenzae (strain ATCC 51907 / DSM 11121 / KW20 / Rd).